A 469-amino-acid polypeptide reads, in one-letter code: Interstitial collagenase (469 aa).

The N-terminal stretch at 1–19 (MFSLLLLLLLLCNTGSHGF) is a signal peptide. Residues 20–99 (PAATSETQEQ…PRCGVPDVAE (80 aa)) constitute a propeptide, activation peptide. S57 bears the Phosphoserine mark. The Cysteine switch motif lies at 90 to 97 (PRCGVPDV). C92 contributes to the Zn(2+) binding site. A glycan (N-linked (GlcNAc...) asparagine) is linked at N120. The Ca(2+) site is built by D124 and D158. Zn(2+) contacts are provided by H168 and D170. Ca(2+) is bound by residues D175, G176, G178, and N180. H183 contributes to the Zn(2+) binding site. Ca(2+)-binding residues include G190, G192, and D194. H196 is a binding site for Zn(2+). Ca(2+)-binding residues include D198, E199, and E201. H218 contacts Zn(2+). The active site involves E219. H222 and H228 together coordinate Zn(2+). Position 274 is a phosphothreonine (T274). Hemopexin repeat units lie at residues 275 to 324 (PQVC…WPQV), 325 to 371 (PNGL…FGFP), 374 to 422 (VKNI…FPGI), and 423 to 466 (GNKV…WFNC). A disulfide bridge links C278 with C466. Positions 285 and 329 each coordinate Ca(2+). Residue Y360 is modified to Phosphotyrosine; by PKDCC. 2 residues coordinate Ca(2+): D378 and D427.

It belongs to the peptidase M10A family. The cofactor is Ca(2+). Zn(2+) is required as a cofactor. In terms of processing, undergoes autolytic cleavage to produce a N-terminal fragment having reduced collagenolytic activity. Post-translationally, tyrosine phosphorylated in platelets by PKDCC/VLK.

Its subcellular location is the secreted. The protein resides in the extracellular space. The protein localises to the extracellular matrix. It carries out the reaction Cleavage of the triple helix of collagen at about three-quarters of the length of the molecule from the N-terminus, at 775-Gly-|-Ile-776 in the alpha1(I) chain. Cleaves synthetic substrates and alpha-macroglobulins at bonds where P1' is a hydrophobic residue.. Can be activated without removal of the activation peptide. Its function is as follows. Cleaves collagens of types I, II, and III at one site in the helical domain. Also cleaves collagens of types VII and X. This Sus scrofa (Pig) protein is Interstitial collagenase (MMP1).